The primary structure comprises 391 residues: Formate-dependent phosphoribosylglycinamide formyltransferase (391 aa).

N(1)-(5-phospho-beta-D-ribosyl)glycinamide-binding positions include 20 to 21 and E80; that span reads EL. Residues R112, K153, 158-163, 193-196, and E201 contribute to the ATP site; these read SSGKGQ and EGFI. The ATP-grasp domain occupies 117-306; that stretch reads RLAAETLGLP…EFALHVRAIL (190 aa). The Mg(2+) site is built by E265 and E277. Residues D284, K354, and 361–362 each bind N(1)-(5-phospho-beta-D-ribosyl)glycinamide; that span reads RR.

This sequence belongs to the PurK/PurT family. In terms of assembly, homodimer.

It catalyses the reaction N(1)-(5-phospho-beta-D-ribosyl)glycinamide + formate + ATP = N(2)-formyl-N(1)-(5-phospho-beta-D-ribosyl)glycinamide + ADP + phosphate + H(+). Its pathway is purine metabolism; IMP biosynthesis via de novo pathway; N(2)-formyl-N(1)-(5-phospho-D-ribosyl)glycinamide from N(1)-(5-phospho-D-ribosyl)glycinamide (formate route): step 1/1. Involved in the de novo purine biosynthesis. Catalyzes the transfer of formate to 5-phospho-ribosyl-glycinamide (GAR), producing 5-phospho-ribosyl-N-formylglycinamide (FGAR). Formate is provided by PurU via hydrolysis of 10-formyl-tetrahydrofolate. This is Formate-dependent phosphoribosylglycinamide formyltransferase from Shewanella sp. (strain ANA-3).